A 236-amino-acid polypeptide reads, in one-letter code: Ribitol-5-phosphate cytidylyltransferase (236 aa).

CTP is bound by residues Leu-7–Gly-10 and Gly-80–Thr-86.

The protein belongs to the IspD/TarI cytidylyltransferase family. TarI subfamily.

The catalysed reaction is D-ribitol 5-phosphate + CTP + H(+) = CDP-L-ribitol + diphosphate. Its pathway is cell wall biogenesis; poly(ribitol phosphate) teichoic acid biosynthesis. Catalyzes the transfer of the cytidylyl group of CTP to D-ribitol 5-phosphate. The sequence is that of Ribitol-5-phosphate cytidylyltransferase from Listeria monocytogenes serovar 1/2a (strain ATCC BAA-679 / EGD-e).